The primary structure comprises 1523 residues: Dicer-like protein 1 (1523 aa).

Residues 24–38 are compositionally biased toward polar residues; the sequence is LNLSGERTISTTEPT. The interval 24–58 is disordered; the sequence is LNLSGERTISTTEPTEGNDSSSEESGDNEQISTQR. In terms of domain architecture, Helicase ATP-binding spans 123-304; the sequence is LFERAKSQNT…ESATKLEVLL (182 aa). 136–143 contributes to the ATP binding site; sequence LDTGSGKT. The DEAH box signature appears at 249–252; that stretch reads DEAH. A Helicase C-terminal domain is found at 444-617; the sequence is LLRQKLIKYF…GIDSEIDSIL (174 aa). The Dicer dsRNA-binding fold domain occupies 640-730; that stretch reads ALAILARYAS…NSVYHRRLPA (91 aa). The 129-residue stretch at 879 to 1007 folds into the PAZ domain; it reads ELLHLVHENE…VCIEPLRISA (129 aa). 2 RNase III domains span residues 1031-1190 and 1241-1392; these read IALE…LSGG and GRKV…VDSD. Residues Glu-1281, Asp-1378, and Glu-1381 each coordinate Mg(2+). A DRBM domain is found at 1426 to 1494; the sequence is TFLQNRLTNE…SEKALSVLEN (69 aa). The Zn(2+) site is built by Cys-1438, His-1465, Cys-1506, and Cys-1508.

This sequence belongs to the helicase family. Dicer subfamily. Requires Mg(2+) as cofactor. Mn(2+) serves as cofactor.

Its function is as follows. Dicer-like endonuclease involved in cleaving double-stranded RNA in the RNA interference (RNAi) pathway. Produces 21 to 25 bp dsRNAs (siRNAs) which target the selective destruction of homologous RNAs leading to sequence-specific suppression of gene expression, called post-transcriptional gene silencing (PTGS). Part of a broad host defense response against viral infection and transposons. The protein is Dicer-like protein 1 (dcl1) of Aspergillus oryzae (strain ATCC 42149 / RIB 40) (Yellow koji mold).